The following is a 322-amino-acid chain: Pantothenate kinase (322 aa).

104 to 111 (GSVAVGKS) provides a ligand contact to ATP.

The protein belongs to the prokaryotic pantothenate kinase family.

The protein localises to the cytoplasm. The catalysed reaction is (R)-pantothenate + ATP = (R)-4'-phosphopantothenate + ADP + H(+). It functions in the pathway cofactor biosynthesis; coenzyme A biosynthesis; CoA from (R)-pantothenate: step 1/5. This chain is Pantothenate kinase, found in Leifsonia xyli subsp. xyli (strain CTCB07).